A 2789-amino-acid chain; its full sequence is MPSDAKDSVNGDLLLNWTSLKNILSGLNASFPLHNNTGSSTVTTSKSIKDPRLMRREESMGEQSSTAGLNEVLQFEKSSDNVNSEIKSTPSNSASSSEVVPGDCAVLTNGLDTPCFKTSVNDSQSWAHNMGSEDYDCIPPNKVTMAGQCKDQGNFSFPISVSNVVSEVENQNHSEEKAQRAQQESGNAYTKEYSSHIFQDSQSSDLKTIYQTGCQTSTVFPLKKKVSIDEYLQNTGKMKNFADLEDSSKHEEKQTSWKEIDNDFTNETKISPIDNYIVLHQEYKESESHNSFGKSCDKILITQELEITKSSTSTIKDKDELDHLALEWQITPSFESLSQKHPQHSVEYEGNIHTSLAIAQKLMELKLGKINQNYASIITEAFPKPKDIPQAKEMFIDTVISSYNIETAHDSSNCSITREHICVHRKNENEPVSLENIQRDYKETAYVEDRGQDHNLFCNSQLSNDIWLNVNFKKQTDRENQNEAKENSASCVENNIENIYGDKKQDSHTNENFSNIDEKEDKNYHNIEILSSEEFSTKFNLICREDNAVSAATALLESEEDTISAVKQKDTENTGRSVEHLASTTFPKTASSSVCVASNAAIQIASATMPALSLNNDDHQIYQFKETCSSESPDFGLLVKHRVSDCEIDTDKNKSQESFHQSINENLVLQSIELESEIEIELEDCDDAFIFQQDTHSHENMLCEEFVTSYKALKSRISWEGLLALDNGEMEVLESTTGRENSDQHYSKESNYFYSSTQNNETELTSPILLPDLQIKITNIFRPGFSPTADSLALKDSFCTHVTEATKPEINKEDGEILGFDIYSQPFGENADYPCEDKVDNIRQESGPVSNSEISLSFDLSRNTDVNHTSENQNSESLFTEPSNVTTIDDGSRCFFTKSKTDYNDTKNKKEVESRISKRKLHISSRDQNIPHKDLRRHKIYGRKRRLTSQDSSECFSSLSQGRIKTFSQSEKHIKSVLNILSDEASLCKSKCLSRKLDKAVVHLKKAHRRVHTSLQLITKVGEERKGPLPKSYAIICNNFWESCDLQGYSSVSQRKYYSTKHFSSKRKYDKRRKKRAPKADISKSLTHVSKHKSYKTSGEKKCLSRKSMASSVSKSHPTTSHMGEFCNQEHPESQLPVSSTSQSTSQSVYYNSSVSNPSLSEEHQPFSGKTAYLFSPDHSDEKLIEKENQIDTAFLSSTSKYEKLEKHSANHNVKDATKENSCDANEVINESNSVSLSCIKENINSSTGNDCDATCIGHTKAKTDVLISVLDSNVKHFLNDLYQQGNLILSDCKRNLEVKWTDPIERPKQNIITGNFLMGPLNLTLIASKKYSIPQLSAAAVTDSEGESSKSYLDKQRILTVDSFAASSTVPHCEQSCREKELLKTEQCSSGNCLHTDGNETNVTENYELDVASGTEEDKSYGENIVELSSSDSSLLLKDNVKGSSSETCIVKKDTEDRITWKVKQAEKAKDSVYKRSMTEGSTVNTEYKNQKNQISEESCLNEKIITTNLIDSHLSTKNTTTESVPLKNTVSNPLNKREKKGEIKVSKDSQSDLTLHSEIAYISKPGILGVNHTPILPAHSETCKVPTLLKKPASYVSDFKEKHCSANHTALIANLSQILQRADEASSLQILQEETKVCLNILPLFVEAFERKQECSVEQILISRELLVDQNLWNNCKHTLKPCAVDTLVELQMMMETIQFIENKKRHLEGEPTLRSLLWYDETLYAELLGKPRGFQQQSNFYPGFQGRLKYNAFCELQTYHDQLVELLEETKREKNSYYVFLKYKRQVNECEAIMEHCSDCFDFSLSVPFTCGVNFGDSLEDLEILRKSTLKLINVCGDSPKVHSYPGKQDHLWIIIEMISSKVNFIKNNEAVRVKISLYGLEHIFFDAAKNLVWKERTQSFSKKYSQKKDEERLLRVNKCAFSKLQKIYDTLSKDLNNEPISPIGLEEDTIIASRKSDHPINEATISIENSKFNSNLLAHPDICCISEILDQAEFADLKKLQDLTLRCTDHLEILKKYFQMLQDNNMDNIFITEENVLDVVINHSHEAIILKPEAIEMYIEIVMVSETIHFLKNSIAKKLDKQRFRGMLWFDLSLLPELVQCQEKMASFSFLKDNSTDVCLWKVIETAVSELKKDLDIICKYNEAVNCSYAIHLLSRELQELSEIKKLLKKSKYFISTYIDFVPYIASINYGSTVTELEYNYNQFSTLLKNVMSAPRKDLGKMAHIRKVMKTIEHMKMICTKNAELTISFFLCQMLYNRRKILQLKRKEKMNIHIVKPGENNNKFSISTMLPPVSECINKNISNSSKKRPSTVDKCEDSQEQQQDTTVSSCKKLKVDMKDVTKINREKATFKHPRTTGSHPKSENKIVPSSCDSLKRNHLTPKKVEMQRSLPGSLLPLENPKDTCASKSESKIDLTVSSDHFSGQQENLNSMKKRNVNFSAAETKSDKKDCAAFAICDQKSVHGTFSPDHGTLLQKFLKNSPDPTQKSCLSDINPETDVSLVPDASVLSKPIFCFVKDVHPDLEMNDTVFELQDNDIVNSSIKNSSCMTSPEPICIQNKIPTLQINKLQPTETESEDKYMKDTLNPNTVHTFGASGHITLNVNQGAEYSLSEQQNDKNSKVLMQNAATYWNELPQSACNPTYNSSEHLFGTSYPYSAWCVYQYSNSNGNAITQTYQGITSYEVQPSPSGLLTTVASTAQGTHSNLLYSQYFTYFAGEPQANGFVPVNGYFQSQIPASNFRQPIFSQYASHQPLPQATYPYLPNRFVPPEVPWVYAPWHQESFHPGH.

The span at 34-46 shows a compositional bias: polar residues; the sequence is HNNTGSSTVTTSK. Disordered stretches follow at residues 34–99, 169–191, 1063–1166, 2303–2331, and 2351–2379; these read HNNT…SSEV, ENQN…AYTK, FSSK…EHQP, KNIS…DTTV, and KATF…DSLK. Residues 47-59 show a composition bias toward basic and acidic residues; sequence SIKDPRLMRREES. The span at 80-98 shows a compositional bias: polar residues; sequence DNVNSEIKSTPSNSASSSE. The segment covering 170–179 has biased composition (basic and acidic residues); the sequence is NQNHSEEKAQ. A compositionally biased stretch (basic residues) spans 1063 to 1077; the sequence is FSSKRKYDKRRKKRA. Low complexity-rich tracts occupy residues 1106–1116 and 1134–1160; these read RKSMASSVSKS and SQLP…NPSL.

The protein belongs to the TEX15 family. In terms of assembly, interacts with PIWIL4 and PIWIL2. As to expression, expressed in testis, predominantly in germ cells. Low expression, if any, in ovary. Also expressed in several cancers.

It is found in the cytoplasm. The protein resides in the nucleus. In terms of biological role, required during spermatogenesis for normal chromosome synapsis and meiotic recombination in germ cells. Necessary for formation of DMC1 and RAD51 foci on meiotic chromosomes, suggesting a specific role in DNA double-stranded break repair. Essential executor of PIWIL4-piRNA pathway directed transposon DNA methylation and silencing in the male embryonic germ cells. PIWIL4-piRNA binds to nascent transposon transcripts and interacts with TEX15, which may in turn recruit the epigenetic silencing machinery to the transposon loci. Not required for piRNA biosynthesis. This Homo sapiens (Human) protein is Testis-expressed protein 15 (TEX15).